A 544-amino-acid polypeptide reads, in one-letter code: Chaperonin GroEL 1 (544 aa).

Residues 30 to 33, lysine 51, 87 to 91, glycine 415, 479 to 481, and aspartate 495 each bind ATP; these read TLGP, DGTTT, and NAA.

The protein belongs to the chaperonin (HSP60) family. As to quaternary structure, forms a cylinder of 14 subunits composed of two heptameric rings stacked back-to-back. Interacts with the co-chaperonin GroES.

It localises to the cytoplasm. It catalyses the reaction ATP + H2O + a folded polypeptide = ADP + phosphate + an unfolded polypeptide.. Functionally, together with its co-chaperonin GroES, plays an essential role in assisting protein folding. The GroEL-GroES system forms a nano-cage that allows encapsulation of the non-native substrate proteins and provides a physical environment optimized to promote and accelerate protein folding. This Vibrio cholerae serotype O1 (strain ATCC 39315 / El Tor Inaba N16961) protein is Chaperonin GroEL 1.